The chain runs to 92 residues: Small ribosomal subunit protein uS19 (92 aa).

Belongs to the universal ribosomal protein uS19 family.

Protein S19 forms a complex with S13 that binds strongly to the 16S ribosomal RNA. This chain is Small ribosomal subunit protein uS19, found in Paracoccus denitrificans (strain Pd 1222).